A 638-amino-acid chain; its full sequence is Signal recognition particle receptor subunit alpha (638 aa).

3 disordered regions span residues 129–205 (KIRA…VELS), 218–245 (IQKHGRGLEKSSKSTKSDAPKEKGKKAP), and 262–315 (SAPT…ATKG). Composition is skewed to basic and acidic residues over residues 137-146 (KKFEDSEKAK) and 153-165 (IETRGEKPKEKAK). Ser177 is modified (phosphoserine). The segment covering 218-239 (IQKHGRGLEKSSKSTKSDAPKE) has biased composition (basic and acidic residues). Thr284 is subject to Phosphothreonine. Residues Ser296, Ser297, and Ser298 each carry the phosphoserine modification. The segment covering 304–314 (AQNASKPSATK) has biased composition (polar residues). Residues 419 to 636 (YVVTFCGVNG…NAKAVVAALM (218 aa)) are NG domain. GTP is bound at residue 425-432 (GVNGVGKS). A Phosphoserine modification is found at Ser473. Position 520-524 (520-524 (DTAGR)) interacts with GTP. The residue at position 578 (Thr578) is a Phosphothreonine. 588–591 (TKFD) provides a ligand contact to GTP.

This sequence belongs to the GTP-binding SRP family. In terms of assembly, heterodimer with SRPRB. Interacts with the signal recognition particle (SRP) complex subunit SRP54.

Its subcellular location is the endoplasmic reticulum membrane. Component of the SRP (signal recognition particle) receptor. Ensures, in conjunction with the signal recognition particle, the correct targeting of the nascent secretory proteins to the endoplasmic reticulum membrane system. Forms a guanosine 5'-triphosphate (GTP)-dependent complex with the SRP subunit SRP54. SRP receptor compaction and GTPase rearrangement drive SRP-mediated cotranslational protein translocation into the ER. This chain is Signal recognition particle receptor subunit alpha, found in Canis lupus familiaris (Dog).